The sequence spans 514 residues: 1-pyrroline-5-carboxylate dehydrogenase (514 aa).

Active-site residues include glutamate 286 and cysteine 320.

This sequence belongs to the aldehyde dehydrogenase family. RocA subfamily.

The catalysed reaction is L-glutamate 5-semialdehyde + NAD(+) + H2O = L-glutamate + NADH + 2 H(+). It participates in amino-acid degradation; L-proline degradation into L-glutamate; L-glutamate from L-proline: step 2/2. In Staphylococcus saprophyticus subsp. saprophyticus (strain ATCC 15305 / DSM 20229 / NCIMB 8711 / NCTC 7292 / S-41), this protein is 1-pyrroline-5-carboxylate dehydrogenase.